A 153-amino-acid polypeptide reads, in one-letter code: Putative riboflavin kinase (153 aa).

Residues T28 and N30 each contribute to the Mg(2+) site. E80 (nucleophile) is an active-site residue.

Monomer. Zn(2+) is required as a cofactor. The cofactor is Mg(2+).

The protein localises to the cytoplasm. It carries out the reaction riboflavin + ATP = FMN + ADP + H(+). The protein operates within cofactor biosynthesis; FMN biosynthesis; FMN from riboflavin (ATP route): step 1/1. Its function is as follows. Catalyzes the phosphorylation of riboflavin (vitamin B2) to form flavin-mononucleotide (FMN). This Drosophila melanogaster (Fruit fly) protein is Putative riboflavin kinase.